Reading from the N-terminus, the 181-residue chain is Large ribosomal subunit protein uL10 (181 aa).

Belongs to the universal ribosomal protein uL10 family. In terms of assembly, part of the ribosomal stalk of the 50S ribosomal subunit. The N-terminus interacts with L11 and the large rRNA to form the base of the stalk. The C-terminus forms an elongated spine to which L12 dimers bind in a sequential fashion forming a multimeric L10(L12)X complex.

In terms of biological role, forms part of the ribosomal stalk, playing a central role in the interaction of the ribosome with GTP-bound translation factors. This chain is Large ribosomal subunit protein uL10, found in Trichormus variabilis (strain ATCC 29413 / PCC 7937) (Anabaena variabilis).